A 588-amino-acid chain; its full sequence is MKLEFTEKNYNSFVLQNLNKQRKRKEYWDIALTVDHHVFFAHRNVLAAVSPLVKNLISNHDMKTTDELFITIDPNYLSPTTVDQLLDYFYSGKVVISEQNVEELLRGAQYFNTPRLRIHCNDFLIKSIRRANCLRYLFLAELFELKEVSDLAYSGIRDNFHYWASPEGCVHFMRCPPVIFGRLLRDENLHVLNEDQALNALINWVCFRKDEREKYFKKFFNYINLNAVSNKTLMYASNKLMGMENSSAHSTLIESVLVDRKQERPTSLLSYQRKGALLDSVVILGGQKAHGKFNDGVFAYIIQENLWLKLSEMPYRAAALSATSAGRYIYISGGTTEQISGLKTAWRYDMDDNSWTKLPDLPIGLVFHTMVTCGGTVYSVGGSIAPRRYVSNIYRYDERKETWCLAGKMSIPMDGTAVITRGDRNLYIVTGRCLVKGYISRVGVVDCFDTNTGEVVQCITFPIEFNHRPLLSFHQDNILCVYSHRQSVEINLQKVKANKTTTSVPLLPNNCPLDVSHAICSVGDNKVFVCGGVTTTTDVQTKDYTINPNAYLLDQKAGEWKTLAPPPEALDCPACCLAKLPCKILQRI.

The BTB domain occupies W28 to E98. S149 is subject to Phosphoserine. Kelch repeat units lie at residues S280–R327, Y328–G375, V377–D423, N425–Q475, D476–N525, and K526–L580.

In terms of assembly, interacts with CYLC1; the interaction may be relevant for proper acrosome attachment to the nuclear envelope. In terms of tissue distribution, expressed in testis and in spermatozoa (at protein level).

Its subcellular location is the cytoplasm. The protein resides in the cytoskeleton. The protein localises to the perinuclear theca. It localises to the calyx. Required for both nuclear and acrosomal shaping during spermiogenesis. This Bos taurus (Bovine) protein is Calicin (CCIN).